A 355-amino-acid chain; its full sequence is DNA-directed RNA polymerase subunit alpha (355 aa).

The tract at residues 1–248 (MYYDDGIPVF…EQLQPFISSD (248 aa)) is alpha N-terminal domain (alpha-NTD). The segment at 267-355 (YDPILLRKVD…ELARQHTDED (89 aa)) is alpha C-terminal domain (alpha-CTD).

The protein belongs to the RNA polymerase alpha chain family. Homodimer. The RNAP catalytic core consists of 2 alpha, 1 beta, 1 beta' and 1 omega subunit. When a sigma factor is associated with the core the holoenzyme is formed, which can initiate transcription.

It carries out the reaction RNA(n) + a ribonucleoside 5'-triphosphate = RNA(n+1) + diphosphate. Functionally, DNA-dependent RNA polymerase catalyzes the transcription of DNA into RNA using the four ribonucleoside triphosphates as substrates. This chain is DNA-directed RNA polymerase subunit alpha, found in Wolbachia sp. subsp. Brugia malayi (strain TRS).